A 115-amino-acid polypeptide reads, in one-letter code: Large ribosomal subunit protein bL19 (115 aa).

Belongs to the bacterial ribosomal protein bL19 family.

In terms of biological role, this protein is located at the 30S-50S ribosomal subunit interface and may play a role in the structure and function of the aminoacyl-tRNA binding site. The protein is Large ribosomal subunit protein bL19 of Tolumonas auensis (strain DSM 9187 / NBRC 110442 / TA 4).